The sequence spans 358 residues: Ion-translocating oxidoreductase complex subunit D (358 aa).

4 consecutive transmembrane segments (helical) span residues 19–39 (IMLW…YYFG), 41–61 (GVVL…FIAI), 79–99 (LTAL…IIII), and 125–145 (IGYV…MPPI). An FMN phosphoryl threonine modification is found at Thr-186. The next 5 membrane-spanning stretches (helical) occupy residues 220-240 (FAQG…FLIL), 248-268 (IPVA…FTGF), 271-291 (LSAI…FIAT), 297-317 (SITP…VYLI), and 321-341 (GNYP…VPLI).

It belongs to the NqrB/RnfD family. In terms of assembly, the complex is composed of six subunits: RnfA, RnfB, RnfC, RnfD, RnfE and RnfG. FMN serves as cofactor.

Its subcellular location is the cell inner membrane. Functionally, part of a membrane-bound complex that couples electron transfer with translocation of ions across the membrane. The sequence is that of Ion-translocating oxidoreductase complex subunit D from Haemophilus influenzae (strain 86-028NP).